The sequence spans 237 residues: Phosphoribosylaminoimidazole-succinocarboxamide synthase (237 aa).

This sequence belongs to the SAICAR synthetase family.

The enzyme catalyses 5-amino-1-(5-phospho-D-ribosyl)imidazole-4-carboxylate + L-aspartate + ATP = (2S)-2-[5-amino-1-(5-phospho-beta-D-ribosyl)imidazole-4-carboxamido]succinate + ADP + phosphate + 2 H(+). Its pathway is purine metabolism; IMP biosynthesis via de novo pathway; 5-amino-1-(5-phospho-D-ribosyl)imidazole-4-carboxamide from 5-amino-1-(5-phospho-D-ribosyl)imidazole-4-carboxylate: step 1/2. The sequence is that of Phosphoribosylaminoimidazole-succinocarboxamide synthase from Methanosarcina acetivorans (strain ATCC 35395 / DSM 2834 / JCM 12185 / C2A).